A 309-amino-acid chain; its full sequence is Chronophin (309 aa).

D25 serves as the catalytic Nucleophile. Mg(2+) contacts are provided by D25 and D27. The Proton donor role is filled by D27. Substrate is bound by residues 58 to 60, H178, and K209; that span reads SNN. D234 serves as a coordination point for Mg(2+).

Belongs to the HAD-like hydrolase superfamily. In terms of assembly, homodimer. Requires Mg(2+) as cofactor.

The protein localises to the cytoplasm. It localises to the cytosol. It is found in the cytoskeleton. The protein resides in the cell projection. Its subcellular location is the ruffle membrane. The protein localises to the lamellipodium membrane. It localises to the cell membrane. The catalysed reaction is pyridoxal 5'-phosphate + H2O = pyridoxal + phosphate. It carries out the reaction pyridoxine 5'-phosphate + H2O = pyridoxine + phosphate. The enzyme catalyses pyridoxamine + phosphate = pyridoxamine 5'-phosphate + H2O. It catalyses the reaction O-phospho-L-seryl-[protein] + H2O = L-seryl-[protein] + phosphate. In terms of biological role, functions as a pyridoxal phosphate (PLP) phosphatase, which also catalyzes the dephosphorylation of pyridoxine 5'-phosphate (PNP) and pyridoxamine 5'-phosphate (PMP), with order of substrate preference PLP &gt; PNP &gt; PMP and therefore plays a role in vitamin B6 metabolism. Also functions as a protein serine phosphatase that specifically dephosphorylates 'Ser-3' in proteins of the actin-depolymerizing factor (ADF)/cofilin family like CFL1 and DSTN. Thereby, regulates cofilin-dependent actin cytoskeleton reorganization, being required for normal progress through mitosis and normal cytokinesis. Does not dephosphorylate phosphothreonines in LIMK1. Does not dephosphorylate peptides containing phosphotyrosine. This chain is Chronophin, found in Rattus norvegicus (Rat).